Here is a 148-residue protein sequence, read N- to C-terminus: SsrA-binding protein (148 aa).

A disordered region spans residues 119–148 (AKGKKQHDKRETEKKRDWEREKARLMRSPG). A compositionally biased stretch (basic and acidic residues) spans 126 to 142 (DKRETEKKRDWEREKAR).

Belongs to the SmpB family.

The protein localises to the cytoplasm. Functionally, required for rescue of stalled ribosomes mediated by trans-translation. Binds to transfer-messenger RNA (tmRNA), required for stable association of tmRNA with ribosomes. tmRNA and SmpB together mimic tRNA shape, replacing the anticodon stem-loop with SmpB. tmRNA is encoded by the ssrA gene; the 2 termini fold to resemble tRNA(Ala) and it encodes a 'tag peptide', a short internal open reading frame. During trans-translation Ala-aminoacylated tmRNA acts like a tRNA, entering the A-site of stalled ribosomes, displacing the stalled mRNA. The ribosome then switches to translate the ORF on the tmRNA; the nascent peptide is terminated with the 'tag peptide' encoded by the tmRNA and targeted for degradation. The ribosome is freed to recommence translation, which seems to be the essential function of trans-translation. The protein is SsrA-binding protein of Paraburkholderia xenovorans (strain LB400).